The sequence spans 210 residues: Redox-sensing transcriptional repressor Rex (210 aa).

The segment at residues 17–56 (KYHRYLGDLLDRDIQRISSKELSDIIGFTASQIRQDLNNF) is a DNA-binding region (H-T-H motif). 91–96 (GAGNLG) contacts NAD(+).

The protein belongs to the transcriptional regulatory Rex family. Homodimer.

The protein localises to the cytoplasm. Modulates transcription in response to changes in cellular NADH/NAD(+) redox state. The protein is Redox-sensing transcriptional repressor Rex of Clostridioides difficile (strain 630) (Peptoclostridium difficile).